Here is a 57-residue protein sequence, read N- to C-terminus: Large ribosomal subunit protein eL37 (57 aa).

Cysteine 20, cysteine 23, cysteine 35, and cysteine 38 together coordinate Zn(2+). The C4-type zinc finger occupies 20–38 (CRRCGEKSYHKQKKVCASC).

It belongs to the eukaryotic ribosomal protein eL37 family. It depends on Zn(2+) as a cofactor.

Functionally, binds to the 23S rRNA. The chain is Large ribosomal subunit protein eL37 from Natronomonas pharaonis (strain ATCC 35678 / DSM 2160 / CIP 103997 / JCM 8858 / NBRC 14720 / NCIMB 2260 / Gabara) (Halobacterium pharaonis).